The chain runs to 313 residues: Beta-lactamase FAR-1 (313 aa).

Positions 1–28 are cleaved as a signal peptide; sequence MPGVDISFLKKSGRRTMAAAAVIALLGG. The N-palmitoyl cysteine moiety is linked to residue cysteine 29. A lipid anchor (S-diacylglycerol cysteine) is attached at cysteine 29. The Acyl-ester intermediate role is filled by serine 94. Residue serine 154 coordinates substrate. The Proton acceptor role is filled by glutamate 190. Residue 258–260 participates in substrate binding; that stretch reads KTG.

Belongs to the class-A beta-lactamase family.

Its subcellular location is the cell membrane. It catalyses the reaction a beta-lactam + H2O = a substituted beta-amino acid. Inhibited by clavulanic acid, and at a low level by tazobactam and sulbactam. Functionally, confers high levels of resistance to amoxicillin, benzylpenicillin, piperacillin, ticarcillin and cephalothin. Also hydrolyzes aztreonam at a low level. Not active against ceftazidime, cefotaxime and imipenem. The chain is Beta-lactamase FAR-1 (bla) from Nocardia farcinica (strain IFM 10152).